We begin with the raw amino-acid sequence, 177 residues long: Mediator of RNA polymerase II transcription subunit 6 (177 aa).

Belongs to the Mediator complex subunit 6 family. As to quaternary structure, component of the Mediator complex.

The protein resides in the nucleus. Functionally, component of the Mediator complex, a coactivator involved in the regulated transcription of nearly all RNA polymerase II-dependent genes. Mediator functions as a bridge to convey information from gene-specific regulatory proteins to the basal RNA polymerase II transcription machinery. Mediator is recruited to promoters by direct interactions with regulatory proteins and serves as a scaffold for the assembly of a functional preinitiation complex with RNA polymerase II and the general transcription factors. The protein is Mediator of RNA polymerase II transcription subunit 6 (MED6) of Encephalitozoon cuniculi (strain GB-M1) (Microsporidian parasite).